A 495-amino-acid polypeptide reads, in one-letter code: Probable cytosol aminopeptidase (495 aa).

K266 and D271 together coordinate Mn(2+). K278 is an active-site residue. 3 residues coordinate Mn(2+): D289, D348, and E350. The active site involves R352.

It belongs to the peptidase M17 family. It depends on Mn(2+) as a cofactor.

Its subcellular location is the cytoplasm. The enzyme catalyses Release of an N-terminal amino acid, Xaa-|-Yaa-, in which Xaa is preferably Leu, but may be other amino acids including Pro although not Arg or Lys, and Yaa may be Pro. Amino acid amides and methyl esters are also readily hydrolyzed, but rates on arylamides are exceedingly low.. It carries out the reaction Release of an N-terminal amino acid, preferentially leucine, but not glutamic or aspartic acids.. Functionally, presumably involved in the processing and regular turnover of intracellular proteins. Catalyzes the removal of unsubstituted N-terminal amino acids from various peptides. This chain is Probable cytosol aminopeptidase, found in Pseudomonas paraeruginosa (strain DSM 24068 / PA7) (Pseudomonas aeruginosa (strain PA7)).